Here is a 104-residue protein sequence, read N- to C-terminus: Large ribosomal subunit protein bL21 (104 aa).

It belongs to the bacterial ribosomal protein bL21 family. As to quaternary structure, part of the 50S ribosomal subunit. Contacts protein L20.

Its function is as follows. This protein binds to 23S rRNA in the presence of protein L20. The polypeptide is Large ribosomal subunit protein bL21 (Streptococcus gordonii (strain Challis / ATCC 35105 / BCRC 15272 / CH1 / DL1 / V288)).